A 293-amino-acid polypeptide reads, in one-letter code: Probable porphobilinogen deaminase (293 aa).

S-(dipyrrolylmethanemethyl)cysteine is present on Cys233.

This sequence belongs to the HMBS family. It depends on dipyrromethane as a cofactor.

The enzyme catalyses 4 porphobilinogen + H2O = hydroxymethylbilane + 4 NH4(+). It participates in porphyrin-containing compound metabolism; protoporphyrin-IX biosynthesis; coproporphyrinogen-III from 5-aminolevulinate: step 2/4. Its function is as follows. Tetrapolymerization of the monopyrrole PBG into the hydroxymethylbilane pre-uroporphyrinogen in several discrete steps. The chain is Probable porphobilinogen deaminase from Saccharolobus islandicus (strain L.S.2.15 / Lassen #1) (Sulfolobus islandicus).